Consider the following 185-residue polypeptide: Large ribosomal subunit protein uL22 (185 aa).

Belongs to the universal ribosomal protein uL22 family. As to quaternary structure, part of the 50S ribosomal subunit.

In terms of biological role, this protein binds specifically to 23S rRNA. It makes multiple contacts with different domains of the 23S rRNA in the assembled 50S subunit and ribosome. The globular domain of the protein is located near the polypeptide exit tunnel on the outside of the subunit, while an extended beta-hairpin is found that lines the wall of the exit tunnel in the center of the 70S ribosome. This chain is Large ribosomal subunit protein uL22, found in Pyrobaculum aerophilum (strain ATCC 51768 / DSM 7523 / JCM 9630 / CIP 104966 / NBRC 100827 / IM2).